Here is a 218-residue protein sequence, read N- to C-terminus: Transmembrane gamma-carboxyglutamic acid protein 1 (218 aa).

The propeptide occupies 1-20 (MGRVFLTGEKANSILKRYPR). Positions 21-66 (ANGFFEEIRQGNIERECKEEFCTFEEAREAFENNEKTKEFWSTYTK) constitute a Gla domain. Residues 21 to 83 (ANGFFEEIRQ…RGSDWFQFYL (63 aa)) lie on the Extracellular side of the membrane. An intrachain disulfide couples C37 to C42. Residues 84–106 (TFPLIFGLFIILLVIFLIWRCFL) form a helical membrane-spanning segment. Over 107–218 (RNKTRRQTVT…PMVPVVTTIK (112 aa)) the chain is Cytoplasmic. A disordered region spans residues 161–195 (TRLSNCDPPPTYEEATGQVNLQRSETEPHLDPPPE).

Gla residues are produced after subsequent post-translational modifications of glutamate by a vitamin K-dependent gamma-carboxylase. Highly expressed in the spinal cord.

The protein resides in the membrane. The polypeptide is Transmembrane gamma-carboxyglutamic acid protein 1 (PRRG1) (Homo sapiens (Human)).